The chain runs to 364 residues: Capsular polysaccharide phosphotransferase fcs1 (364 aa).

Belongs to the stealth family.

Functionally, part of a group II capsule biosynthesis locus. The protein is Capsular polysaccharide phosphotransferase fcs1 (fcs1) of Haemophilus influenzae.